The primary structure comprises 293 residues: Sphingolipid C4-hydroxylase sur2 (293 aa).

3 consecutive transmembrane segments (helical) span residues 18 to 38, 68 to 88, and 127 to 147; these read LVSP…LHYI, AVLF…MFEG, and FIVP…WQYF. One can recognise a Fatty acid hydroxylase domain in the interval 136-270; sequence FAFFIIDSWQ…FTFWDHVLGT (135 aa).

Belongs to the sterol desaturase family.

Its subcellular location is the endoplasmic reticulum membrane. It functions in the pathway membrane lipid metabolism; sphingolipid biosynthesis. In terms of biological role, required for hydroxylation of C-4 in the sphingoid moiety of ceramide. Involved in the response to syringomycin. This is Sphingolipid C4-hydroxylase sur2 (sur2) from Schizosaccharomyces pombe (strain 972 / ATCC 24843) (Fission yeast).